The chain runs to 479 residues: Cysteine--tRNA ligase (479 aa).

Position 28 (cysteine 28) interacts with Zn(2+). The 'HIGH' region motif lies at 30–40 (PTVYDHAHLGH). Zn(2+)-binding residues include cysteine 207, histidine 232, and glutamate 236. The 'KMSKS' region signature appears at 264–268 (KMSKS). Lysine 267 provides a ligand contact to ATP.

Belongs to the class-I aminoacyl-tRNA synthetase family. Zn(2+) is required as a cofactor.

It is found in the cytoplasm. It catalyses the reaction tRNA(Cys) + L-cysteine + ATP = L-cysteinyl-tRNA(Cys) + AMP + diphosphate. The chain is Cysteine--tRNA ligase from Methanococcus aeolicus (strain ATCC BAA-1280 / DSM 17508 / OCM 812 / Nankai-3).